We begin with the raw amino-acid sequence, 302 residues long: Oxygen-dependent coproporphyrinogen-III oxidase (302 aa).

Ser94 provides a ligand contact to substrate. A divalent metal cation is bound by residues His98 and His108. His108 (proton donor) is an active-site residue. 110-112 (NVR) is a binding site for substrate. A divalent metal cation contacts are provided by His147 and His177. The important for dimerization stretch occupies residues 242-277 (YVEFNLVYDRGTIFGLQSGGRTESILMSLPPLVRWD). Residue 260 to 262 (GGR) participates in substrate binding.

It belongs to the aerobic coproporphyrinogen-III oxidase family. Homodimer. Requires a divalent metal cation as cofactor.

It is found in the cytoplasm. The enzyme catalyses coproporphyrinogen III + O2 + 2 H(+) = protoporphyrinogen IX + 2 CO2 + 2 H2O. It functions in the pathway porphyrin-containing compound metabolism; protoporphyrin-IX biosynthesis; protoporphyrinogen-IX from coproporphyrinogen-III (O2 route): step 1/1. Its function is as follows. Involved in the heme biosynthesis. Catalyzes the aerobic oxidative decarboxylation of propionate groups of rings A and B of coproporphyrinogen-III to yield the vinyl groups in protoporphyrinogen-IX. The polypeptide is Oxygen-dependent coproporphyrinogen-III oxidase (Alcanivorax borkumensis (strain ATCC 700651 / DSM 11573 / NCIMB 13689 / SK2)).